A 979-amino-acid chain; its full sequence is Pro-apoptotic serine protease NMA111 (979 aa).

The interval 1–20 (MTIMNEGKKRSHSSSSDDHL) is disordered. The serine protease stretch occupies residues 65–255 (VVSIHFAQVA…LPLDRILRAL (191 aa)). Catalysis depends on charge relay system residues histidine 103, aspartate 134, and serine 217. 2 consecutive PDZ domains span residues 273 to 361 (WLLK…RGGT) and 750 to 836 (SILH…VRDG).

The protein belongs to the peptidase S1C family.

The protein resides in the nucleus. Its function is as follows. Nuclear serine protease which mediates apoptosis. The chain is Pro-apoptotic serine protease NMA111 (NMA111) from Candida glabrata (strain ATCC 2001 / BCRC 20586 / JCM 3761 / NBRC 0622 / NRRL Y-65 / CBS 138) (Yeast).